Here is a 62-residue protein sequence, read N- to C-terminus: Kunitz-type serine protease inhibitor (62 aa).

A BPTI/Kunitz inhibitor domain is found at 2-52 (CYLPDDPGVCKAHIPRFYYNPASNKCKNFIYGGCGGNANNFETRAECRHTC). Intrachain disulfides connect Cys-2–Cys-52, Cys-11–Cys-35, and Cys-27–Cys-48.

The protein belongs to the venom Kunitz-type family. Expressed by the venom gland.

It is found in the secreted. Functionally, serine protease inhibitor that inhibits trypsin. The recombinant protein also barely blocks voltage-gated potassium channel Kv1.3/KCNA3 (3.70% inhibition at 60 nM of toxin). The polypeptide is Kunitz-type serine protease inhibitor (Eristicophis macmahoni (Leaf-nosed viper)).